A 575-amino-acid chain; its full sequence is MGSSLDLVASFSHDSTRFAFQASVAQKNNVDIYPLNETKDYVVNSSLVSHIDYETNDMKVSDVIFFGWCSDLIDTQSSNIKRKLDEDEGTGESSEQRCENFFVNGFPDGRIVVYSSNGKDIVNIIKNKKEILGADTDESDIWILDSDKVVKKLQYNNSKPLKTFTLVDGKDDEIVHFQILHQNGTLLVCIITKQMVYIVDPSKRRPSTKYSFEISDAVACEFSSDGKYLLIANNEELIAYDLKEDSKLIQSWPVQVKTLKTLDDLIMALTTDGKINNYKIGEADKVCSIVVNEDLEIIDFTPINSKQQVLISWLNVNEPNFESISLKEIETQGYITINKNEKNNADEADQKKLEEKEEEAQPEVQHEKKETETKINKKVSKSDQVEIANILSSHLEANSTEILDDLMSGSWTEPEIKKFILTKINTVDHLSKIFLTISKSITQNPWNEENLLPLWLKWLLTLKSGELNSIKDKHTKKNCKHLKSALRSSEEILPVLLGIQGRLEMLRRQAKLREDLAQLSMQEGEDDEIEVIEHSNVISNPLQDQASPVEKLEPDSIVYANGESDEFVDASEYKD.

2 stretches are compositionally biased toward basic and acidic residues: residues 340–355 (NEKN…KLEE) and 364–375 (VQHEKKETETKI). Positions 340-375 (NEKNNADEADQKKLEEKEEEAQPEVQHEKKETETKI) are disordered. Serine 547 and serine 564 each carry phosphoserine.

In terms of assembly, interacts with snoRNA U3. Interacts with MPP10. Component of the ribosomal small subunit (SSU) processome composed of at least 40 protein subunits and snoRNA U3. In the absence of snoRNA3, forms a complex with other t-UTPs. This complex can associate with pre-18S ribosomal RNAs.

It localises to the nucleus. The protein localises to the nucleolus. Its function is as follows. Involved in nucleolar processing of pre-18S ribosomal RNA. Required for optimal pre-ribosomal RNA transcription by RNA polymerase I together with a subset of U3 proteins required for transcription (t-UTPs). The sequence is that of U3 small nucleolar RNA-associated protein 9 (UTP9) from Saccharomyces cerevisiae (strain ATCC 204508 / S288c) (Baker's yeast).